Consider the following 469-residue polypeptide: Ribulose bisphosphate carboxylase large chain (469 aa).

A propeptide spanning residues 1–2 (MS) is cleaved from the precursor. Pro3 is subject to N-acetylproline. At Lys14 the chain carries N6,N6,N6-trimethyllysine. 2 residues coordinate substrate: Asn123 and Thr173. The active-site Proton acceptor is the Lys175. Lys177 provides a ligand contact to substrate. Mg(2+) is bound by residues Lys201, Asp203, and Glu204. Lys201 is subject to N6-carboxylysine. Residue His294 is the Proton acceptor of the active site. Substrate is bound by residues Arg295, His327, and Ser379.

The protein belongs to the RuBisCO large chain family. Type I subfamily. Heterohexadecamer of 8 large chains and 8 small chains; disulfide-linked. The disulfide link is formed within the large subunit homodimers. Mg(2+) serves as cofactor. Post-translationally, the disulfide bond which can form in the large chain dimeric partners within the hexadecamer appears to be associated with oxidative stress and protein turnover.

It is found in the plastid. The protein localises to the chloroplast. It carries out the reaction 2 (2R)-3-phosphoglycerate + 2 H(+) = D-ribulose 1,5-bisphosphate + CO2 + H2O. The catalysed reaction is D-ribulose 1,5-bisphosphate + O2 = 2-phosphoglycolate + (2R)-3-phosphoglycerate + 2 H(+). RuBisCO catalyzes two reactions: the carboxylation of D-ribulose 1,5-bisphosphate, the primary event in carbon dioxide fixation, as well as the oxidative fragmentation of the pentose substrate in the photorespiration process. Both reactions occur simultaneously and in competition at the same active site. The sequence is that of Ribulose bisphosphate carboxylase large chain from Atriplex patula (Common orache).